A 292-amino-acid polypeptide reads, in one-letter code: NAD kinase (292 aa).

Aspartate 73 acts as the Proton acceptor in catalysis. NAD(+)-binding positions include 73–74 (DG), 147–148 (NE), histidine 158, arginine 175, aspartate 177, 188–193 (TAYSLS), and glutamine 247.

It belongs to the NAD kinase family. A divalent metal cation is required as a cofactor.

It localises to the cytoplasm. It carries out the reaction NAD(+) + ATP = ADP + NADP(+) + H(+). Its function is as follows. Involved in the regulation of the intracellular balance of NAD and NADP, and is a key enzyme in the biosynthesis of NADP. Catalyzes specifically the phosphorylation on 2'-hydroxyl of the adenosine moiety of NAD to yield NADP. This is NAD kinase from Erwinia tasmaniensis (strain DSM 17950 / CFBP 7177 / CIP 109463 / NCPPB 4357 / Et1/99).